Reading from the N-terminus, the 104-residue chain is Replication restart protein PriB (104 aa).

The SSB domain maps to 1 to 101 (MTNRLVLSGT…LHAEQIDLID (101 aa)).

It belongs to the PriB family. Homodimer. Interacts with PriA and DnaT. Component of the replication restart primosome. Primosome assembly occurs via a 'hand-off' mechanism. PriA binds to replication forks, subsequently PriB then DnaT bind; DnaT then displaces ssDNA to generate the helicase loading substrate.

Functionally, involved in the restart of stalled replication forks, which reloads the replicative helicase on sites other than the origin of replication; the PriA-PriB pathway is the major replication restart pathway. During primosome assembly it facilitates complex formation between PriA and DnaT on DNA; stabilizes PriA on DNA. Stimulates the DNA unwinding activity of PriA helicase. The sequence is that of Replication restart protein PriB from Enterobacter sp. (strain 638).